We begin with the raw amino-acid sequence, 155 residues long: 6,7-dimethyl-8-ribityllumazine synthase (155 aa).

Residues Phe23, 57-59 (AFE), and 80-82 (AVI) each bind 5-amino-6-(D-ribitylamino)uracil. 85 to 86 (AT) contributes to the (2S)-2-hydroxy-3-oxobutyl phosphate binding site. Residue His88 is the Proton donor of the active site. Tyr113 contacts 5-amino-6-(D-ribitylamino)uracil. Arg127 serves as a coordination point for (2S)-2-hydroxy-3-oxobutyl phosphate.

This sequence belongs to the DMRL synthase family.

It carries out the reaction (2S)-2-hydroxy-3-oxobutyl phosphate + 5-amino-6-(D-ribitylamino)uracil = 6,7-dimethyl-8-(1-D-ribityl)lumazine + phosphate + 2 H2O + H(+). The protein operates within cofactor biosynthesis; riboflavin biosynthesis; riboflavin from 2-hydroxy-3-oxobutyl phosphate and 5-amino-6-(D-ribitylamino)uracil: step 1/2. Catalyzes the formation of 6,7-dimethyl-8-ribityllumazine by condensation of 5-amino-6-(D-ribitylamino)uracil with 3,4-dihydroxy-2-butanone 4-phosphate. This is the penultimate step in the biosynthesis of riboflavin. The sequence is that of 6,7-dimethyl-8-ribityllumazine synthase from Moorella thermoacetica (strain ATCC 39073 / JCM 9320).